Here is a 105-residue protein sequence, read N- to C-terminus: Guanidinium exporter (105 aa).

Position 1 (methionine 1) is a topological domain, cytoplasmic. A helical membrane pass occupies residues 2–19 (SWIVLLIAGLLEVVWAIG). The Periplasmic portion of the chain corresponds to 20-28 (LKYTHGFTR). The chain crosses the membrane as a helical span at residues 29–48 (LTPSIITIAAMIVSIAMLSW). Over 49 to 54 (AMRTLP) the chain is Cytoplasmic. A helical transmembrane segment spans residues 55 to 77 (VGTAYAVWTGIGAVGAAITGILL). At 78 to 86 (LGESASPAR) the chain is on the periplasmic side. A helical membrane pass occupies residues 87–104 (LLSLGLIVAGIIGLKLST). A topological domain (cytoplasmic) is located at residue histidine 105.

It belongs to the drug/metabolite transporter (DMT) superfamily. Small multidrug resistance (SMR) (TC 2.A.7.1) family. Gdx/SugE subfamily.

The protein resides in the cell inner membrane. In terms of biological role, guanidinium ion exporter. Couples guanidinium export to the proton motive force, exchanging one guanidinium ion for two protons. The polypeptide is Guanidinium exporter (Citrobacter freundii).